A 101-amino-acid polypeptide reads, in one-letter code: Small ribosomal subunit protein uS10 (101 aa).

Belongs to the universal ribosomal protein uS10 family. In terms of assembly, part of the 30S ribosomal subunit.

Its function is as follows. Involved in the binding of tRNA to the ribosomes. The chain is Small ribosomal subunit protein uS10 from Cytophaga hutchinsonii (strain ATCC 33406 / DSM 1761 / CIP 103989 / NBRC 15051 / NCIMB 9469 / D465).